Reading from the N-terminus, the 204-residue chain is Holliday junction branch migration complex subunit RuvA (204 aa).

Positions 1 to 64 are domain I; it reads MISRMKGIIL…EDAQLLYGFH (64 aa). The segment at 65 to 143 is domain II; the sequence is HPKERAMFSE…NLNKNLFKST (79 aa). The tract at residues 144–155 is flexible linker; sequence ADHMLSSVSTDL. The domain III stretch occupies residues 156-204; sequence SAKSAEAEAISALISLGYKPQEAAQLIKNIAQPDLDSQALIKHALRSTL.

Belongs to the RuvA family. Homotetramer. Forms an RuvA(8)-RuvB(12)-Holliday junction (HJ) complex. HJ DNA is sandwiched between 2 RuvA tetramers; dsDNA enters through RuvA and exits via RuvB. An RuvB hexamer assembles on each DNA strand where it exits the tetramer. Each RuvB hexamer is contacted by two RuvA subunits (via domain III) on 2 adjacent RuvB subunits; this complex drives branch migration. In the full resolvosome a probable DNA-RuvA(4)-RuvB(12)-RuvC(2) complex forms which resolves the HJ.

The protein resides in the cytoplasm. In terms of biological role, the RuvA-RuvB-RuvC complex processes Holliday junction (HJ) DNA during genetic recombination and DNA repair, while the RuvA-RuvB complex plays an important role in the rescue of blocked DNA replication forks via replication fork reversal (RFR). RuvA specifically binds to HJ cruciform DNA, conferring on it an open structure. The RuvB hexamer acts as an ATP-dependent pump, pulling dsDNA into and through the RuvAB complex. HJ branch migration allows RuvC to scan DNA until it finds its consensus sequence, where it cleaves and resolves the cruciform DNA. The protein is Holliday junction branch migration complex subunit RuvA of Hamiltonella defensa subsp. Acyrthosiphon pisum (strain 5AT).